Here is a 699-residue protein sequence, read N- to C-terminus: Cysteine--tRNA ligase (699 aa).

Residues 1 to 226 are unknown; the sequence is MTTITEKRLT…SEQQRLIHNP (226 aa). Position 254 (C254) interacts with Zn(2+). The 'HIGH' region motif lies at 256–266; it reads MTVYDYCHLGH. Residues C435, H460, and E464 each contribute to the Zn(2+) site. Positions 508–512 match the 'KMSKS' region motif; the sequence is KMSKS. K511 is an ATP binding site.

It belongs to the class-I aminoacyl-tRNA synthetase family. As to quaternary structure, monomer. The cofactor is Zn(2+).

The protein localises to the cytoplasm. It catalyses the reaction tRNA(Cys) + L-cysteine + ATP = L-cysteinyl-tRNA(Cys) + AMP + diphosphate. This Neisseria meningitidis serogroup A / serotype 4A (strain DSM 15465 / Z2491) protein is Cysteine--tRNA ligase (cysS).